Reading from the N-terminus, the 351-residue chain is Phosphate acyltransferase (351 aa).

This sequence belongs to the PlsX family. In terms of assembly, homodimer. Probably interacts with PlsY.

The protein resides in the cytoplasm. It catalyses the reaction a fatty acyl-[ACP] + phosphate = an acyl phosphate + holo-[ACP]. It functions in the pathway lipid metabolism; phospholipid metabolism. Functionally, catalyzes the reversible formation of acyl-phosphate (acyl-PO(4)) from acyl-[acyl-carrier-protein] (acyl-ACP). This enzyme utilizes acyl-ACP as fatty acyl donor, but not acyl-CoA. This chain is Phosphate acyltransferase, found in Neisseria meningitidis serogroup A / serotype 4A (strain DSM 15465 / Z2491).